A 1207-amino-acid polypeptide reads, in one-letter code: DNA-directed RNA polymerase subunit beta' (1207 aa).

4 residues coordinate Zn(2+): cysteine 60, cysteine 62, cysteine 75, and cysteine 78. The Mg(2+) site is built by aspartate 449, aspartate 451, and aspartate 453. Zn(2+) contacts are provided by cysteine 822, cysteine 896, cysteine 903, and cysteine 906.

This sequence belongs to the RNA polymerase beta' chain family. In terms of assembly, the RNAP catalytic core consists of 2 alpha, 1 beta, 1 beta' and 1 omega subunit. When a sigma factor is associated with the core the holoenzyme is formed, which can initiate transcription. Requires Mg(2+) as cofactor. It depends on Zn(2+) as a cofactor.

It carries out the reaction RNA(n) + a ribonucleoside 5'-triphosphate = RNA(n+1) + diphosphate. Its function is as follows. DNA-dependent RNA polymerase catalyzes the transcription of DNA into RNA using the four ribonucleoside triphosphates as substrates. The protein is DNA-directed RNA polymerase subunit beta' of Staphylococcus aureus (strain USA300).